Consider the following 142-residue polypeptide: Small ribosomal subunit protein uS12 (142 aa).

The segment at 1 to 44 is disordered; sequence MANGKYAARKLKQDRQKHRWSDSDYARRARGLGKKSDPLEGAPQ. Residues 11–27 show a composition bias toward basic and acidic residues; that stretch reads LKQDRQKHRWSDSDYAR.

The protein belongs to the universal ribosomal protein uS12 family. Part of the 30S ribosomal subunit.

Its function is as follows. With S4 and S5 plays an important role in translational accuracy. Located at the interface of the 30S and 50S subunits. This is Small ribosomal subunit protein uS12 from Natronomonas pharaonis (strain ATCC 35678 / DSM 2160 / CIP 103997 / JCM 8858 / NBRC 14720 / NCIMB 2260 / Gabara) (Halobacterium pharaonis).